The chain runs to 536 residues: Bifunctional purine biosynthesis protein PurH (536 aa).

The MGS-like domain maps to 8–158; the sequence is IPAPDEVRIQ…KNHAYVTIVT (151 aa).

This sequence belongs to the PurH family.

It carries out the reaction (6R)-10-formyltetrahydrofolate + 5-amino-1-(5-phospho-beta-D-ribosyl)imidazole-4-carboxamide = 5-formamido-1-(5-phospho-D-ribosyl)imidazole-4-carboxamide + (6S)-5,6,7,8-tetrahydrofolate. The catalysed reaction is IMP + H2O = 5-formamido-1-(5-phospho-D-ribosyl)imidazole-4-carboxamide. The protein operates within purine metabolism; IMP biosynthesis via de novo pathway; 5-formamido-1-(5-phospho-D-ribosyl)imidazole-4-carboxamide from 5-amino-1-(5-phospho-D-ribosyl)imidazole-4-carboxamide (10-formyl THF route): step 1/1. Its pathway is purine metabolism; IMP biosynthesis via de novo pathway; IMP from 5-formamido-1-(5-phospho-D-ribosyl)imidazole-4-carboxamide: step 1/1. In Sinorhizobium fredii (strain NBRC 101917 / NGR234), this protein is Bifunctional purine biosynthesis protein PurH.